We begin with the raw amino-acid sequence, 62 residues long: Photosystem II reaction center protein Z (62 aa).

2 consecutive transmembrane segments (helical) span residues 8-28 and 41-61; these read AVFALIATSSILLISVPVVFA and FSGTSLWIALVFLVGILNSLI.

Belongs to the PsbZ family. PSII is composed of 1 copy each of membrane proteins PsbA, PsbB, PsbC, PsbD, PsbE, PsbF, PsbH, PsbI, PsbJ, PsbK, PsbL, PsbM, PsbT, PsbY, PsbZ, Psb30/Ycf12, at least 3 peripheral proteins of the oxygen-evolving complex and a large number of cofactors. It forms dimeric complexes.

It is found in the plastid. Its subcellular location is the chloroplast thylakoid membrane. Functionally, may control the interaction of photosystem II (PSII) cores with the light-harvesting antenna, regulates electron flow through the 2 photosystem reaction centers. PSII is a light-driven water plastoquinone oxidoreductase, using light energy to abstract electrons from H(2)O, generating a proton gradient subsequently used for ATP formation. The protein is Photosystem II reaction center protein Z of Lotus japonicus (Lotus corniculatus var. japonicus).